Here is a 181-residue protein sequence, read N- to C-terminus: Probable nicotinate-nucleotide adenylyltransferase (181 aa).

Belongs to the NadD family.

It catalyses the reaction nicotinate beta-D-ribonucleotide + ATP + H(+) = deamido-NAD(+) + diphosphate. It participates in cofactor biosynthesis; NAD(+) biosynthesis; deamido-NAD(+) from nicotinate D-ribonucleotide: step 1/1. Catalyzes the reversible adenylation of nicotinate mononucleotide (NaMN) to nicotinic acid adenine dinucleotide (NaAD). In Campylobacter fetus subsp. fetus (strain 82-40), this protein is Probable nicotinate-nucleotide adenylyltransferase.